Reading from the N-terminus, the 545-residue chain is CTP synthase (545 aa).

The interval 1–266 (MTTNYIFVTG…DDYICKRFSL (266 aa)) is amidoligase domain. Serine 14 lines the CTP pocket. Serine 14 contacts UTP. ATP is bound by residues 15–20 (SLGKGI) and aspartate 72. The Mg(2+) site is built by aspartate 72 and glutamate 140. CTP is bound by residues 147–149 (DIE), 187–192 (KTKPTQ), and lysine 223. UTP is bound by residues 187-192 (KTKPTQ) and lysine 223. 239-241 (KDI) serves as a coordination point for ATP. In terms of domain architecture, Glutamine amidotransferase type-1 spans 291 to 542 (TIGMVGKYVA…VKAAGAYQKR (252 aa)). Residue glycine 352 participates in L-glutamine binding. The active-site Nucleophile; for glutamine hydrolysis is the cysteine 379. L-glutamine-binding positions include 380 to 383 (LGMQ), glutamate 403, and arginine 470. Active-site residues include histidine 515 and glutamate 517.

It belongs to the CTP synthase family. In terms of assembly, homotetramer.

It carries out the reaction UTP + L-glutamine + ATP + H2O = CTP + L-glutamate + ADP + phosphate + 2 H(+). The enzyme catalyses L-glutamine + H2O = L-glutamate + NH4(+). It catalyses the reaction UTP + NH4(+) + ATP = CTP + ADP + phosphate + 2 H(+). The protein operates within pyrimidine metabolism; CTP biosynthesis via de novo pathway; CTP from UDP: step 2/2. With respect to regulation, allosterically activated by GTP, when glutamine is the substrate; GTP has no effect on the reaction when ammonia is the substrate. The allosteric effector GTP functions by stabilizing the protein conformation that binds the tetrahedral intermediate(s) formed during glutamine hydrolysis. Inhibited by the product CTP, via allosteric rather than competitive inhibition. Functionally, catalyzes the ATP-dependent amination of UTP to CTP with either L-glutamine or ammonia as the source of nitrogen. Regulates intracellular CTP levels through interactions with the four ribonucleotide triphosphates. This Pectobacterium atrosepticum (strain SCRI 1043 / ATCC BAA-672) (Erwinia carotovora subsp. atroseptica) protein is CTP synthase.